A 353-amino-acid polypeptide reads, in one-letter code: Ferredoxin--NADP reductase 1 (353 aa).

T14, D33, Q41, Y46, A86, F121, D289, and T330 together coordinate FAD.

This sequence belongs to the ferredoxin--NADP reductase type 2 family. In terms of assembly, homodimer. FAD is required as a cofactor.

It carries out the reaction 2 reduced [2Fe-2S]-[ferredoxin] + NADP(+) + H(+) = 2 oxidized [2Fe-2S]-[ferredoxin] + NADPH. The protein is Ferredoxin--NADP reductase 1 of Christiangramia forsetii (strain DSM 17595 / CGMCC 1.15422 / KT0803) (Gramella forsetii).